The chain runs to 506 residues: uncharacterized protein (506 aa).

The protein to group II intron maturases.

It is found in the plastid. It localises to the chloroplast. This is an uncharacterized protein from Euglena gracilis.